The sequence spans 263 residues: Type III pantothenate kinase (263 aa).

14 to 21 (DIGNTSVN) contacts ATP. 115-118 (GADR) is a substrate binding site. The active-site Proton acceptor is the D117. Residue D137 participates in K(+) binding. Position 140 (T140) interacts with ATP. A substrate-binding site is contributed by T192.

This sequence belongs to the type III pantothenate kinase family. Homodimer. NH4(+) serves as cofactor. The cofactor is K(+).

The protein resides in the cytoplasm. The enzyme catalyses (R)-pantothenate + ATP = (R)-4'-phosphopantothenate + ADP + H(+). The protein operates within cofactor biosynthesis; coenzyme A biosynthesis; CoA from (R)-pantothenate: step 1/5. Catalyzes the phosphorylation of pantothenate (Pan), the first step in CoA biosynthesis. This is Type III pantothenate kinase from Dehalococcoides mccartyi (strain CBDB1).